A 78-amino-acid chain; its full sequence is Large ribosomal subunit protein bL28 (78 aa).

The protein belongs to the bacterial ribosomal protein bL28 family.

In Thermosynechococcus vestitus (strain NIES-2133 / IAM M-273 / BP-1), this protein is Large ribosomal subunit protein bL28.